Here is a 433-residue protein sequence, read N- to C-terminus: Serine hydroxymethyltransferase (433 aa).

(6S)-5,6,7,8-tetrahydrofolate is bound by residues leucine 133 and 137-139; that span reads GHL. The residue at position 242 (lysine 242) is an N6-(pyridoxal phosphate)lysine. 366–368 is a (6S)-5,6,7,8-tetrahydrofolate binding site; the sequence is SPF.

The protein belongs to the SHMT family. Homodimer. The cofactor is pyridoxal 5'-phosphate.

The protein resides in the cytoplasm. It carries out the reaction (6R)-5,10-methylene-5,6,7,8-tetrahydrofolate + glycine + H2O = (6S)-5,6,7,8-tetrahydrofolate + L-serine. Its pathway is one-carbon metabolism; tetrahydrofolate interconversion. It functions in the pathway amino-acid biosynthesis; glycine biosynthesis; glycine from L-serine: step 1/1. In terms of biological role, catalyzes the reversible interconversion of serine and glycine with tetrahydrofolate (THF) serving as the one-carbon carrier. This reaction serves as the major source of one-carbon groups required for the biosynthesis of purines, thymidylate, methionine, and other important biomolecules. Also exhibits THF-independent aldolase activity toward beta-hydroxyamino acids, producing glycine and aldehydes, via a retro-aldol mechanism. The protein is Serine hydroxymethyltransferase of Beijerinckia indica subsp. indica (strain ATCC 9039 / DSM 1715 / NCIMB 8712).